The chain runs to 433 residues: Serine hydroxymethyltransferase (433 aa).

Position 121 to 123 (121 to 123) interacts with (6S)-5,6,7,8-tetrahydrofolate; sequence AHV. At lysine 227 the chain carries N6-(pyridoxal phosphate)lysine. Glutamate 243 provides a ligand contact to (6S)-5,6,7,8-tetrahydrofolate.

Belongs to the SHMT family. Homodimer. It depends on pyridoxal 5'-phosphate as a cofactor.

The protein resides in the cytoplasm. The protein operates within amino-acid biosynthesis; glycine biosynthesis; glycine from L-serine: step 1/1. In terms of biological role, catalyzes the reversible interconversion of serine and glycine with a modified folate serving as the one-carbon carrier. Also exhibits a pteridine-independent aldolase activity toward beta-hydroxyamino acids, producing glycine and aldehydes, via a retro-aldol mechanism. The polypeptide is Serine hydroxymethyltransferase (Saccharolobus islandicus (strain M.14.25 / Kamchatka #1) (Sulfolobus islandicus)).